Consider the following 191-residue polypeptide: Small ribosomal subunit protein uS7 (191 aa).

It belongs to the universal ribosomal protein uS7 family. Part of the 30S ribosomal subunit.

Its function is as follows. One of the primary rRNA binding proteins, it binds directly to 16S rRNA where it nucleates assembly of the head domain of the 30S subunit. Is located at the subunit interface close to the decoding center. The sequence is that of Small ribosomal subunit protein uS7 from Methanocaldococcus jannaschii (strain ATCC 43067 / DSM 2661 / JAL-1 / JCM 10045 / NBRC 100440) (Methanococcus jannaschii).